The chain runs to 160 residues: Cyclic pyranopterin monophosphate synthase (160 aa).

Residues 77 to 79 and 115 to 116 contribute to the substrate site; these read LCH and ME. Residue D130 is part of the active site.

This sequence belongs to the MoaC family. Homohexamer; trimer of dimers.

It carries out the reaction (8S)-3',8-cyclo-7,8-dihydroguanosine 5'-triphosphate = cyclic pyranopterin phosphate + diphosphate. It participates in cofactor biosynthesis; molybdopterin biosynthesis. Its function is as follows. Catalyzes the conversion of (8S)-3',8-cyclo-7,8-dihydroguanosine 5'-triphosphate to cyclic pyranopterin monophosphate (cPMP). In Parvibaculum lavamentivorans (strain DS-1 / DSM 13023 / NCIMB 13966), this protein is Cyclic pyranopterin monophosphate synthase.